We begin with the raw amino-acid sequence, 166 residues long: Thioredoxin, mitochondrial (166 aa).

The transit peptide at 1–59 (MAQRLLLRRFLTSIISGKPSQSRWAPVASRALQTPQYSPGYLTVTPSQARSIYTTRVCS) directs the protein to the mitochondrion. The region spanning 61-166 (TFNIQDGPDF…LEAFLKKLIG (106 aa)) is the Thioredoxin domain. Active-site nucleophile residues include C90 and C93. The cysteines at positions 90 and 93 are disulfide-linked. K152 is subject to N6-acetyllysine; alternate. K152 carries the N6-succinyllysine; alternate modification.

Belongs to the thioredoxin family. As to quaternary structure, monomer.

It localises to the mitochondrion. Important for the control of mitochondrial reactive oxygen species homeostasis, apoptosis regulation and cell viability. Is involved in various redox reactions including the reduction of protein disulfide bonds, through the reversible oxidation of its active center dithiol to a disulfide. The polypeptide is Thioredoxin, mitochondrial (TXN2) (Bos taurus (Bovine)).